The chain runs to 217 residues: UDP-N-acetylglucosamine transferase subunit ALG14 (217 aa).

The Lumenal segment spans residues 1-3 (MLS). Residues 4 to 26 (ILILAATAAGLVILLFQRLWTVL) form a helical membrane-spanning segment. Residues 27–217 (GPHHVTPRES…PKSVYLGRIV (191 aa)) lie on the Cytoplasmic side of the membrane.

The protein belongs to the ALG14 family. As to quaternary structure, forms with ALG13 the active heterodimeric UDP-N-acetylglucosamine transferase complex.

It is found in the endoplasmic reticulum membrane. Its function is as follows. Part of the UDP-N-acetylglucosamine transferase complex that operates in the biosynthetic pathway of dolichol-linked oligosaccharides, the glycan precursors employed in protein asparagine (N)-glycosylation. The assembly of dolichol-linked oligosaccharides begins on the cytosolic side of the endoplasmic reticulum membrane and finishes in its lumen. The sequential addition of sugars to dolichol pyrophosphate produces dolichol-linked oligosaccharides containing fourteen sugars, including two GlcNAcs, nine mannoses and three glucoses. Once assembled, the oligosaccharides are transferred from the lipid to nascent proteins by oligosaccharyltransferases. Functions as a protein-membrane adapter recruiting ALG13 at the cytoplasmic face of the endoplasmic reticulum, where the complex catalyzes the second step of dolichol pyrophosphate biosynthesis, transferring a beta1,4-linked N-acetylglucosamine (GlcNAc) from UDP-GlcNAc to GlcNAc-pyrophosphatedolichol (Gn-PDol) to produce N,N'-diacetylchitobiosyl diphosphodolichol. N,N'-diacetylchitobiosyl diphosphodolichol is a substrate for ALG1, the following enzyme in the biosynthetic pathway. This is UDP-N-acetylglucosamine transferase subunit ALG14 from Mus musculus (Mouse).